A 123-amino-acid chain; its full sequence is Large ribosomal subunit protein uL14 (123 aa).

It belongs to the universal ribosomal protein uL14 family. In terms of assembly, part of the 50S ribosomal subunit. Forms a cluster with proteins L3 and L19. In the 70S ribosome, L14 and L19 interact and together make contacts with the 16S rRNA in bridges B5 and B8.

Its function is as follows. Binds to 23S rRNA. Forms part of two intersubunit bridges in the 70S ribosome. The chain is Large ribosomal subunit protein uL14 from Cronobacter sakazakii (strain ATCC BAA-894) (Enterobacter sakazakii).